A 23-amino-acid chain; its full sequence is Acidic phospholipase A2 CTs-A2 (23 aa).

It depends on Ca(2+) as a cofactor. Post-translationally, contains 7 disulfide bonds. In terms of tissue distribution, expressed by the venom gland.

The protein localises to the secreted. The catalysed reaction is a 1,2-diacyl-sn-glycero-3-phosphocholine + H2O = a 1-acyl-sn-glycero-3-phosphocholine + a fatty acid + H(+). In terms of biological role, snake venom phospholipase A2 (PLA2) that shows a moderate inhibition of ADP-induced human platelet aggregation when tested on platelet rich plasma. Exhibits moderate hydrolytic activities and prefers the anionic micelles (dPPC with deoxycholate) to the zwitterionic micelles (dPPC with Triton X-100). PLA2 catalyzes the calcium-dependent hydrolysis of the 2-acyl groups in 3-sn-phosphoglycerides. This is Acidic phospholipase A2 CTs-A2 from Trimeresurus stejnegeri (Chinese green tree viper).